A 130-amino-acid polypeptide reads, in one-letter code: Cytochrome c-type biogenesis protein CcmE (130 aa).

At 1 to 7 (MKKKHKR) the chain is on the cytoplasmic side. The helical; Signal-anchor for type II membrane protein transmembrane segment at 8–28 (LLITSGIFCFLSCAVFFILTT) threads the bilayer. The Extracellular segment spans residues 29 to 130 (LKENISFFYT…DENYMPKVLK (102 aa)). Positions 120 and 124 each coordinate heme.

Belongs to the CcmE/CycJ family.

It localises to the cell membrane. Heme chaperone required for the biogenesis of c-type cytochromes. Transiently binds heme delivered by CcmC and transfers the heme to apo-cytochromes in a process facilitated by CcmF and CcmH. In Wolbachia pipientis wMel, this protein is Cytochrome c-type biogenesis protein CcmE.